The chain runs to 145 residues: Large ribosomal subunit protein uL11 (145 aa).

This sequence belongs to the universal ribosomal protein uL11 family. In terms of assembly, part of the ribosomal stalk of the 50S ribosomal subunit. Interacts with L10 and the large rRNA to form the base of the stalk. L10 forms an elongated spine to which L12 dimers bind in a sequential fashion forming a multimeric L10(L12)X complex. Post-translationally, one or more lysine residues are methylated.

Functionally, forms part of the ribosomal stalk which helps the ribosome interact with GTP-bound translation factors. In Sulfurihydrogenibium sp. (strain YO3AOP1), this protein is Large ribosomal subunit protein uL11.